The chain runs to 424 residues: Histidinol dehydrogenase homolog (424 aa).

The Zn(2+) site is built by glutamine 250 and histidine 253. Catalysis depends on proton acceptor residues glutamate 318 and histidine 319. The Zn(2+) site is built by aspartate 352 and histidine 411.

This sequence belongs to the histidinol dehydrogenase family. Requires Zn(2+) as cofactor.

In Shouchella clausii (strain KSM-K16) (Alkalihalobacillus clausii), this protein is Histidinol dehydrogenase homolog.